Reading from the N-terminus, the 211-residue chain is Protein TMA23 (211 aa).

The segment at 115-211 (ASFVVSSASS…SARRDRKEHI (97 aa)) is disordered. A compositionally biased stretch (low complexity) spans 116-125 (SFVVSSASSS). Basic residues-rich tracts occupy residues 140–149 (VKRKKLKKDK), 158–176 (KKKK…KKSK), and 185–197 (SKHK…KKHK). Residues 198–211 (KEESSARRDRKEHI) are compositionally biased toward basic and acidic residues.

In terms of assembly, forms homooligomers. Associates with ribosomal complexes.

It is found in the nucleus. The protein localises to the nucleolus. Functionally, trans-acting factors of the ribosome biogenesis process. The sequence is that of Protein TMA23 (TMA23) from Saccharomyces cerevisiae (strain ATCC 204508 / S288c) (Baker's yeast).